The following is a 322-amino-acid chain: NADH-cytochrome b5 reductase 2 (322 aa).

Residues 31 to 48 (LAPIYAAVGITGVGVGLY) traverse the membrane as a helical segment. Residues 72-176 (QGWFDLKLSE…KGPIVKYPWE (105 aa)) form the FAD-binding FR-type domain. 179 to 214 (KHNHICLIAGGTGITPMYQLAREIFKNPEDQTKVTL) provides a ligand contact to FAD.

Belongs to the flavoprotein pyridine nucleotide cytochrome reductase family. Requires FAD as cofactor.

It localises to the mitochondrion outer membrane. The enzyme catalyses 2 Fe(III)-[cytochrome b5] + NADH = 2 Fe(II)-[cytochrome b5] + NAD(+) + H(+). In terms of biological role, may mediate the reduction of outer membrane cytochrome b5. This is NADH-cytochrome b5 reductase 2 (mcr1) from Aspergillus niger (strain ATCC MYA-4892 / CBS 513.88 / FGSC A1513).